A 593-amino-acid chain; its full sequence is Bifunctional purine biosynthesis protein ATIC (593 aa).

One can recognise an MGS-like domain in the interval 1 to 147 (MAARQQLALL…KNHARVTVVC (147 aa)). Residues 1-199 (MAARQQLALL…ISDYFRKEYS (199 aa)) form an IMP cyclohydrolase region. IMP-binding positions include 13-15 (SEK), 35-38 (SGGT), 65-68 (RVKT), 102-103 (CN), and 126-127 (DI). Residue Lys-138 is the Proton donor/acceptor; for FAICAR cyclization activity of the active site. Lys-200 is subject to N6-acetyllysine. The segment at 200–593 (KGVSQLPLRY…IHTNLRLFHH (394 aa)) is AICAR formyltransferase. 5-amino-1-(5-phospho-beta-D-ribosyl)imidazole-4-carboxamide is bound by residues 208–209 (RY), His-268, Gly-317, Asp-340, Asn-432, and Arg-452. Catalysis depends on His-268, which acts as the Proton acceptor; for AICAR formyltransferase activity. A (6R)-10-formyltetrahydrofolate-binding site is contributed by Ile-453. Phe-542 is a 5-amino-1-(5-phospho-beta-D-ribosyl)imidazole-4-carboxamide binding site. Residues Asp-547 and 566-567 (SA) each bind (6R)-10-formyltetrahydrofolate. 5-amino-1-(5-phospho-beta-D-ribosyl)imidazole-4-carboxamide is bound at residue Arg-589.

Belongs to the PurH family. As to quaternary structure, homodimer. Associates with internalized INSR complexes on Golgi/endosomal membranes. Interacts with INSR; ATIC together with PRKAA2/AMPK2 and HACD3/PTPLAD1 is proposed to be part of a signaling network regulating INSR autophosphorylation and endocytosis.

Its subcellular location is the cytoplasm. The protein resides in the cytosol. The enzyme catalyses (6R)-10-formyltetrahydrofolate + 5-amino-1-(5-phospho-beta-D-ribosyl)imidazole-4-carboxamide = 5-formamido-1-(5-phospho-D-ribosyl)imidazole-4-carboxamide + (6S)-5,6,7,8-tetrahydrofolate. It catalyses the reaction 10-formyldihydrofolate + 5-amino-1-(5-phospho-beta-D-ribosyl)imidazole-4-carboxamide = 5-formamido-1-(5-phospho-D-ribosyl)imidazole-4-carboxamide + 7,8-dihydrofolate. It carries out the reaction IMP + H2O = 5-formamido-1-(5-phospho-D-ribosyl)imidazole-4-carboxamide. Its pathway is purine metabolism; IMP biosynthesis via de novo pathway; 5-formamido-1-(5-phospho-D-ribosyl)imidazole-4-carboxamide from 5-amino-1-(5-phospho-D-ribosyl)imidazole-4-carboxamide (10-formyl THF route): step 1/1. It functions in the pathway purine metabolism; IMP biosynthesis via de novo pathway; IMP from 5-formamido-1-(5-phospho-D-ribosyl)imidazole-4-carboxamide: step 1/1. AMP and XMP inhibit AICAR formyltransferase activity. AICAR formyltransferase activity is competitively inhibited by 2-[5-hydroxy-3-methyl-1-(2-methyl-4-sulfo-phenyl)-1H-pyrazol-4-ylazo]-4-sulfo-benzoic acid (326203-A). FAICAR cyclization is competitively inhibited by 1,5-dihydroimidazo[4,5-c][1,2,6]thiadiazin-4(3H)-one-2,2-dioxide and the corresponding nucleoside and nucleoside monophosphate. Functionally, bifunctional enzyme that catalyzes the last two steps of purine biosynthesis. Acts as a transformylase that incorporates a formyl group to the AMP analog AICAR (5-amino-1-(5-phospho-beta-D-ribosyl)imidazole-4-carboxamide) to produce the intermediate formyl-AICAR (FAICAR). Can use both 10-formyldihydrofolate and 10-formyltetrahydrofolate as the formyl donor in this reaction. Also catalyzes the cyclization of FAICAR to inosine monophosphate (IMP). Promotes insulin receptor/INSR autophosphorylation and is involved in INSR internalization. The polypeptide is Bifunctional purine biosynthesis protein ATIC (ATIC) (Gallus gallus (Chicken)).